The sequence spans 195 residues: Orotate phosphoribosyltransferase (195 aa).

5-phospho-alpha-D-ribose 1-diphosphate contacts are provided by residues Arg86, Lys90, His92, and 111–119 (DDVATTGVS). 2 residues coordinate orotate: Thr115 and Arg143.

Belongs to the purine/pyrimidine phosphoribosyltransferase family. PyrE subfamily. In terms of assembly, homodimer. Mg(2+) is required as a cofactor.

It carries out the reaction orotidine 5'-phosphate + diphosphate = orotate + 5-phospho-alpha-D-ribose 1-diphosphate. Its pathway is pyrimidine metabolism; UMP biosynthesis via de novo pathway; UMP from orotate: step 1/2. Its function is as follows. Catalyzes the transfer of a ribosyl phosphate group from 5-phosphoribose 1-diphosphate to orotate, leading to the formation of orotidine monophosphate (OMP). The chain is Orotate phosphoribosyltransferase from Saccharolobus solfataricus (strain ATCC 35092 / DSM 1617 / JCM 11322 / P2) (Sulfolobus solfataricus).